The chain runs to 1177 residues: Solute carrier family 9 member C1 (1177 aa).

Topologically, residues 1 to 17 are extracellular; that stretch reads MAGIFKEFFFSTEDLPE. Residues 18-37 traverse the membrane as a helical segment; that stretch reads VILTLSLISSIGAFLNRHLE. The Cytoplasmic portion of the chain corresponds to 38–42; that stretch reads DFPIP. The helical transmembrane segment at 43-60 threads the bilayer; the sequence is VPVILFLLGCSFEVLSFT. Topologically, residues 61 to 76 are extracellular; the sequence is SSQVQRYANAIQWMSP. A helical membrane pass occupies residues 77-93; sequence DLFFRIFTPVVFFTTAF. Residues 94–103 are Cytoplasmic-facing; that stretch reads DMDTYMLQKL. The chain crosses the membrane as a helical span at residues 104–129; the sequence is FWQILLISIPGFLVNYILVLWHLASV. Positions 104–191 are transport core domain; it reads FWQILLISIP…SLITFTSIMD (88 aa). At 130–135 the chain is on the extracellular side; sequence NQLLLK. A helical transmembrane segment spans residues 136–161; sequence PTQWLLFSAILVSSDPMLTAAAIRDL. At 162 to 164 the chain is on the cytoplasmic side; the sequence is GLS. A helical membrane pass occupies residues 165 to 190; it reads RSLISLINGESLMTSVISLITFTSIM. Residues 191–204 lie on the Extracellular side of the membrane; that stretch reads DFDQRLQSKRNHTL. The chain crosses the membrane as a helical span at residues 205-236; it reads AEEIVGGICSYIIASFLFGILSSKLIQFWMST. Residues 237–240 lie on the Cytoplasmic side of the membrane; the sequence is VFGD. The helical transmembrane segment at 241–262 threads the bilayer; the sequence is DVNHISLIFSILYLIFYICELV. Residues 263-265 lie on the Extracellular side of the membrane; it reads GMS. Residues 266–279 form a helical membrane-spanning segment; that stretch reads GIFTLAIVGLLLNS. Residues 280–286 are Cytoplasmic-facing; that stretch reads TSFKAAI. A helical membrane pass occupies residues 287–319; sequence EETLLLEFWTFLSRIAFLMVFTFFGLLIPAHTY. The Extracellular segment spans residues 320–324; that stretch reads LYIEF. The chain crosses the membrane as a helical span at residues 325–354; the sequence is VDIYYSLNIYLTLIVLRFLTLLLISPVLSR. The tract at residues 325-426 is transport core domain; the sequence is VDIYYSLNIY…FILPVAVTIL (102 aa). At 355–360 the chain is on the cytoplasmic side; sequence VGHEFS. A helical membrane pass occupies residues 361 to 391; the sequence is WRWIFIMVCSEMKGMPNINMALLLAYSDLYF. Topologically, residues 392-395 are extracellular; that stretch reads GSDK. The helical transmembrane segment at 396–426 threads the bilayer; sequence EKSQILFHGVLVCLITLVVNRFILPVAVTIL. The Cytoplasmic portion of the chain corresponds to 427–612; it reads GLRDATSTKY…ICHTIVFTEE (186 aa). The ion transport-like stretch occupies residues 598–678; that stretch reads YFFFRICHTI…DFFSHAWNIF (81 aa). A helical transmembrane segment spans residues 613–633; it reads FEHVGYLVILMNIFPFIISWI. Residues 634-637 are Extracellular-facing; sequence SQLN. The chain crosses the membrane as a helical span at residues 638-664; that stretch reads VIYHSELKHTNYCFLTLYILEALLKIA. The Cytoplasmic segment spans residues 665-671; the sequence is AMRKDFF. The helical transmembrane segment at 672 to 696 threads the bilayer; that stretch reads SHAWNIFELAITLIGILHVILIEID. Topologically, residues 697 to 704 are extracellular; sequence TIKYIFNE. The helical transmembrane segment at 705–731 threads the bilayer; it reads TEVIVFIKVVQFFRILRIFKLIAPKLL. Topologically, residues 732–1177 are cytoplasmic; it reads QIIDKRMSHQ…RINLRKVRKE (446 aa).

Belongs to the monovalent cation:proton antiporter 1 (CPA1) transporter (TC 2.A.36) family. As to quaternary structure, interacts with soluble adenylyl cyclase (sAC). Sperm.

The protein resides in the cell projection. It localises to the cilium. The protein localises to the flagellum membrane. In terms of biological role, sperm-specific solute carrier involved in intracellular pH regulation of spermatozoa. Required for sperm motility and fertility. Involved in sperm cell hyperactivation, a step needed for sperm motility which is essential late in the preparation of sperm for fertilization. Required for the expression and bicarbonate regulation of the soluble adenylyl cyclase (sAC). This is Solute carrier family 9 member C1 (SLC9C1) from Homo sapiens (Human).